We begin with the raw amino-acid sequence, 602 residues long: Probable translation initiation factor IF-2 (602 aa).

The region spanning 18–233 (LRTPIVCVMG…LVGLAQRFLK (216 aa)) is the tr-type G domain. Residues 27 to 34 (GHVDHGKT) are G1. Residue 27–34 (GHVDHGKT) coordinates GTP. Residues 52–56 (AITQH) form a G2 region. Residues 88–91 (DTPG) form a G3 region. Residues 88 to 92 (DTPGH) and 142 to 145 (NKID) each bind GTP. Residues 142–145 (NKID) form a G4 region. The interval 210-212 (SAI) is G5.

The protein belongs to the TRAFAC class translation factor GTPase superfamily. Classic translation factor GTPase family. IF-2 subfamily.

Its function is as follows. Function in general translation initiation by promoting the binding of the formylmethionine-tRNA to ribosomes. Seems to function along with eIF-2. The chain is Probable translation initiation factor IF-2 from Methanothrix thermoacetophila (strain DSM 6194 / JCM 14653 / NBRC 101360 / PT) (Methanosaeta thermophila).